The following is a 78-amino-acid chain: Small ribosomal subunit protein bS18 (78 aa).

It belongs to the bacterial ribosomal protein bS18 family. In terms of assembly, part of the 30S ribosomal subunit. Forms a tight heterodimer with protein bS6.

Binds as a heterodimer with protein bS6 to the central domain of the 16S rRNA, where it helps stabilize the platform of the 30S subunit. This is Small ribosomal subunit protein bS18 from Acidothermus cellulolyticus (strain ATCC 43068 / DSM 8971 / 11B).